The sequence spans 442 residues: tRNA modification GTPase MnmE (442 aa).

Positions 24, 82, and 120 each coordinate (6S)-5-formyl-5,6,7,8-tetrahydrofolate. In terms of domain architecture, TrmE-type G spans 217–367 (GLHIVITGEP…LVSVIKEKVE (151 aa)). Residues 227-232 (NVGKST), 246-252 (SEYVGTT), and 271-274 (DTAG) contribute to the GTP site. Mg(2+) is bound by residues Ser-231 and Thr-252. Position 442 (Lys-442) interacts with (6S)-5-formyl-5,6,7,8-tetrahydrofolate.

The protein belongs to the TRAFAC class TrmE-Era-EngA-EngB-Septin-like GTPase superfamily. TrmE GTPase family. In terms of assembly, homodimer. Heterotetramer of two MnmE and two MnmG subunits. The cofactor is K(+).

It localises to the cytoplasm. Exhibits a very high intrinsic GTPase hydrolysis rate. Involved in the addition of a carboxymethylaminomethyl (cmnm) group at the wobble position (U34) of certain tRNAs, forming tRNA-cmnm(5)s(2)U34. The polypeptide is tRNA modification GTPase MnmE (Wolbachia sp. subsp. Brugia malayi (strain TRS)).